The primary structure comprises 571 residues: Proline-rich protein 35 (571 aa).

Disordered stretches follow at residues 1–27, 79–187, 286–402, and 476–571; these read MSRE…PHYI, GSTT…EGSV, APVS…GSPE, and GPQA…GAEV. The segment covering 16 to 26 has biased composition (basic residues); it reads ARSRKPKKPHY. The span at 165-175 shows a compositional bias: gly residues; the sequence is GMGGDPRGVGA. The span at 316–336 shows a compositional bias: basic and acidic residues; it reads TPRDPGQEGELERAAQSDPRR. A compositionally biased stretch (polar residues) spans 351–367; it reads PSLTRFCSRSSLPTGSS. Pro residues predominate over residues 380 to 399; sequence PETPGPEGPLPLQPRGPVPG.

This Homo sapiens (Human) protein is Proline-rich protein 35 (PRR35).